Reading from the N-terminus, the 180-residue chain is Large ribosomal subunit protein uL5 (180 aa).

This sequence belongs to the universal ribosomal protein uL5 family. In terms of assembly, part of the 50S ribosomal subunit; part of the 5S rRNA/L5/L18/L25 subcomplex. Contacts the 5S rRNA and the P site tRNA. Forms a bridge to the 30S subunit in the 70S ribosome.

This is one of the proteins that bind and probably mediate the attachment of the 5S RNA into the large ribosomal subunit, where it forms part of the central protuberance. In the 70S ribosome it contacts protein S13 of the 30S subunit (bridge B1b), connecting the 2 subunits; this bridge is implicated in subunit movement. Contacts the P site tRNA; the 5S rRNA and some of its associated proteins might help stabilize positioning of ribosome-bound tRNAs. The polypeptide is Large ribosomal subunit protein uL5 (Synechococcus sp. (strain JA-2-3B'a(2-13)) (Cyanobacteria bacterium Yellowstone B-Prime)).